Consider the following 245-residue polypeptide: Nucleoprotein (245 aa).

RNA contacts are provided by Tyr30, Lys67, Arg106, Arg186, and Ser196.

This sequence belongs to the phlebovirus nucleocapsid protein family. Homodimer. Homohexamer; ring-shaped, necessary to form the nucleocapsid. Homopentamers; opened pentamers in solution. Binds to viral genomic RNA. Interacts with glycoprotein Gn; this interaction allows packaging of nucleocapsids into virions.

The protein localises to the virion. It is found in the host cytoplasm. Its subcellular location is the host nucleus. It localises to the host endoplasmic reticulum-Golgi intermediate compartment. The protein resides in the host Golgi apparatus. Functionally, encapsidates the genomic RNA, protecting it from nucleases. Displays high affinity for single-stranded nucleic acid. The encapsidated genomic RNA is termed the nucleocapsid (NC) or ribonucleoprotein. The ribonucleoprotein has a non-helical structure. Serves as template for viral transcription and replication. After replication, the nucleocapsid is recruited to the host Golgi apparatus by glycoprotein Gn for packaging into virus particles. The sequence is that of Nucleoprotein (NP) from Dabie bandavirus (Severe fever with thrombocytopenia virus).